We begin with the raw amino-acid sequence, 292 residues long: uncharacterized protein (292 aa).

Its subcellular location is the virion. This is an uncharacterized protein from Acanthamoeba polyphaga (Amoeba).